A 341-amino-acid chain; its full sequence is tRNA N6-adenosine threonylcarbamoyltransferase (341 aa).

Residues H114 and H118 each coordinate Fe cation. Substrate is bound by residues 136-140, D169, G182, D186, and N278; that span reads LVSGG. D304 provides a ligand contact to Fe cation.

Belongs to the KAE1 / TsaD family. Fe(2+) serves as cofactor.

It is found in the cytoplasm. It carries out the reaction L-threonylcarbamoyladenylate + adenosine(37) in tRNA = N(6)-L-threonylcarbamoyladenosine(37) in tRNA + AMP + H(+). Its function is as follows. Required for the formation of a threonylcarbamoyl group on adenosine at position 37 (t(6)A37) in tRNAs that read codons beginning with adenine. Is involved in the transfer of the threonylcarbamoyl moiety of threonylcarbamoyl-AMP (TC-AMP) to the N6 group of A37, together with TsaE and TsaB. TsaD likely plays a direct catalytic role in this reaction. This chain is tRNA N6-adenosine threonylcarbamoyltransferase, found in Lactococcus lactis subsp. cremoris (strain SK11).